A 310-amino-acid polypeptide reads, in one-letter code: Proline iminopeptidase (310 aa).

Positions 33-290 (PVIFLHGGPG…RVVQAGHCAF (258 aa)) constitute an AB hydrolase-1 domain. Residue Ser107 is the Nucleophile of the active site. Asp260 is a catalytic residue. The Proton donor role is filled by His287.

The protein belongs to the peptidase S33 family.

It is found in the cytoplasm. The enzyme catalyses Release of N-terminal proline from a peptide.. Its function is as follows. Hydrolyzes peptides having the structure Pro-Y-Z to yield free proline. Also hydrolyzes the dipeptide Pro-Gly. The protein is Proline iminopeptidase (pip) of Neisseria gonorrhoeae.